We begin with the raw amino-acid sequence, 245 residues long: MGQKTHPYGFRLGITKDWKSHWYAERSDYSSLLHEDWAIRNYIKKNYYQAGISLIEIERKAANRVDITIHTARPGMLIGRGGSEIENIRKNLVKLTNKSVFVNVQEVKNPELDAQLVAENIATQIEKRINYKRAMKQAINRALRAGAKGVKVMCSGRLNGAEIARSEWFREGRIPLQTLTADIDYGFAEAFTISGVIGVKVWIYKGDVPELHKEPIQELPEKAVPKKIEDEDLYEKDEVNYDVDA.

The KH type-2 domain occupies 39–108 (IRNYIKKNYY…SVFVNVQEVK (70 aa)).

The protein belongs to the universal ribosomal protein uS3 family. Part of the 30S ribosomal subunit. Forms a tight complex with proteins S10 and S14.

Functionally, binds the lower part of the 30S subunit head. Binds mRNA in the 70S ribosome, positioning it for translation. The chain is Small ribosomal subunit protein uS3 from Dictyoglomus turgidum (strain DSM 6724 / Z-1310).